The following is a 329-amino-acid chain: MSAYIIETLIKILILVAVFSALGGFATYIERKVLAYFQRRLGPCYVGPFGLLQVAADGIKLFTKEDIIPQGANKFIFTLAPIIAMVSAFVSMAPIPFFPNFTLFGYEIKPLISDINIGFLFFLAVGAAGIYAPILAGLASNNKYSLIGSARATIQLLSFEVVSTLTILAPLMVVGSLSLVEINHYQSGGFLDWLVFKQPLAFVLFLIASYAELNRTPFDLLEHEAEIVAGYCTEYSGLKWGMFFLAEYAHLFAFSFVISIVFFGGFNAWGFIPGGIAILIKAGFFVFLSMWVRATYPHVRPDQLMDMCWKIMLPLALLNIVLTGIIILI.

9 helical membrane passes run 9–29, 42–62, 75–95, 117–137, 154–174, 188–208, 238–258, 269–291, and 309–329; these read LIKI…ATYI, GPCY…IKLF, FIFT…MAPI, IGFL…ILAG, IQLL…LMVV, GGFL…FLIA, LKWG…SFVI, WGFI…LSMW, and WKIM…IILI.

It belongs to the complex I subunit 1 family. As to quaternary structure, NDH-1 is composed of 14 different subunits. Subunits NuoA, H, J, K, L, M, N constitute the membrane sector of the complex.

The protein localises to the cell inner membrane. The enzyme catalyses a quinone + NADH + 5 H(+)(in) = a quinol + NAD(+) + 4 H(+)(out). Its function is as follows. NDH-1 shuttles electrons from NADH, via FMN and iron-sulfur (Fe-S) centers, to quinones in the respiratory chain. The immediate electron acceptor for the enzyme in this species is believed to be ubiquinone. Couples the redox reaction to proton translocation (for every two electrons transferred, four hydrogen ions are translocated across the cytoplasmic membrane), and thus conserves the redox energy in a proton gradient. This subunit may bind ubiquinone. The sequence is that of NADH-quinone oxidoreductase subunit H from Helicobacter pylori (strain P12).